The following is a 155-amino-acid chain: uncharacterized protein (155 aa).

The N-acetyltransferase domain maps to 6-155 (LRIELGEETN…RDMVRLYLDL (150 aa)). Residues 69–71 (IAV), 77–82 (KKGFGK), and 111–117 (QLSLYQK) each bind CoA.

Its function is as follows. Probable N-acetyltransferase. This is an uncharacterized protein from Bacillus subtilis (strain 168).